Reading from the N-terminus, the 124-residue chain is Glycine cleavage system H protein (124 aa).

In terms of domain architecture, Lipoyl-binding spans 24–106 (TYTMGITDHA…YDDGWLVKFK (83 aa)). An N6-lipoyllysine modification is found at Lys-65.

This sequence belongs to the GcvH family. The glycine cleavage system is composed of four proteins: P, T, L and H. (R)-lipoate is required as a cofactor.

The glycine cleavage system catalyzes the degradation of glycine. The H protein shuttles the methylamine group of glycine from the P protein to the T protein. This chain is Glycine cleavage system H protein, found in Ruthia magnifica subsp. Calyptogena magnifica.